The primary structure comprises 430 residues: Uric acid permease PucK (430 aa).

The next 14 membrane-spanning stretches (helical) occupy residues 18–38 (MLAM…AIGL), 43–63 (LTYL…LQLW), 67–87 (YFGI…GPMI), 97–117 (AIYG…GFFG), 122–142 (FFPP…LIPT), 163–183 (LLGF…KGFI), 185–205 (SIAI…MGKV), 209–229 (EVLE…PPTF), 233–253 (AVVT…GVYF), 274–294 (AEGL…TAFS), 310–330 (VIAI…AAAL), 333–353 (VIPT…VISY), 369–389 (LLII…PALF), and 398–418 (VLAG…HAFF).

It belongs to the nucleobase:cation symporter-2 (NCS2) (TC 2.A.40) family.

It localises to the cell membrane. Uptake of uric acid. This Bacillus subtilis (strain 168) protein is Uric acid permease PucK (pucK).